The sequence spans 152 residues: Small ribosomal subunit protein uS19x (152 aa).

Belongs to the universal ribosomal protein uS19 family.

The protein localises to the cytoplasm. This chain is Small ribosomal subunit protein uS19x (RPS15D), found in Arabidopsis thaliana (Mouse-ear cress).